Consider the following 348-residue polypeptide: Bifunctional nitrilase/nitrile hydratase NIT4B (348 aa).

One can recognise a CN hydrolase domain in the interval 29–300 (VRATVVQAST…EALISADLDL (272 aa)). The Proton acceptor role is filled by E69. K156 acts as the Proton donor in catalysis. C190 serves as the catalytic Nucleophile.

This sequence belongs to the carbon-nitrogen hydrolase superfamily. Nitrilase family. As to expression, expressed in roots, stems, cotyledons, leaves and flowers.

The catalysed reaction is a nitrile + 2 H2O = a carboxylate + NH4(+). It catalyses the reaction 3-cyano-L-alanine + 2 H2O = L-aspartate + NH4(+). In terms of biological role, highly specific for beta-cyano-L-alanine (Ala(CN)). Low activity with 3-phenylpropionitrile (PPN). Not associated with auxin production but may be involved in cyanide detoxification. In Nicotiana tabacum (Common tobacco), this protein is Bifunctional nitrilase/nitrile hydratase NIT4B (NIT4B).